The primary structure comprises 353 residues: S-adenosylmethionine:tRNA ribosyltransferase-isomerase (353 aa).

It belongs to the QueA family. Monomer.

The protein localises to the cytoplasm. The enzyme catalyses 7-aminomethyl-7-carbaguanosine(34) in tRNA + S-adenosyl-L-methionine = epoxyqueuosine(34) in tRNA + adenine + L-methionine + 2 H(+). It participates in tRNA modification; tRNA-queuosine biosynthesis. Its function is as follows. Transfers and isomerizes the ribose moiety from AdoMet to the 7-aminomethyl group of 7-deazaguanine (preQ1-tRNA) to give epoxyqueuosine (oQ-tRNA). The protein is S-adenosylmethionine:tRNA ribosyltransferase-isomerase of Paraburkholderia phymatum (strain DSM 17167 / CIP 108236 / LMG 21445 / STM815) (Burkholderia phymatum).